A 144-amino-acid polypeptide reads, in one-letter code: MRNCAFRIIAVGKVRKGWIQDGLAMYQKRLPGLIITEVRDASMPREAEAIRAALNSNEVLVPLSEEGEALTSVSFAKRLEKYGSQRLAFVIGGADGLSAELKNSTQWQLSLSAMTLPHELARLLLVEQLYRAQTITQGGKYHRS.

S-adenosyl-L-methionine contacts are provided by residues leucine 63, glycine 92, and 111 to 116 (LSAMTL).

The protein belongs to the RNA methyltransferase RlmH family. As to quaternary structure, homodimer.

The protein resides in the cytoplasm. The catalysed reaction is pseudouridine(1915) in 23S rRNA + S-adenosyl-L-methionine = N(3)-methylpseudouridine(1915) in 23S rRNA + S-adenosyl-L-homocysteine + H(+). Its function is as follows. Specifically methylates the pseudouridine at position 1915 (m3Psi1915) in 23S rRNA. The protein is Ribosomal RNA large subunit methyltransferase H of Prochlorococcus marinus (strain MIT 9313).